Consider the following 650-residue polypeptide: DNA topoisomerase 3 (650 aa).

The 134-residue stretch at Met1–Ile134 folds into the Toprim domain. Mg(2+)-binding residues include Glu7, Asp103, and Asp105. Residues Phe155–Met617 form the Topo IA-type catalytic domain. The interaction with DNA stretch occupies residues Ser194 to Gln199. Tyr342 acts as the O-(5'-phospho-DNA)-tyrosine intermediate in catalysis.

The protein belongs to the type IA topoisomerase family. The cofactor is Mg(2+).

It catalyses the reaction ATP-independent breakage of single-stranded DNA, followed by passage and rejoining.. In terms of biological role, releases the supercoiling and torsional tension of DNA, which is introduced during the DNA replication and transcription, by transiently cleaving and rejoining one strand of the DNA duplex. Introduces a single-strand break via transesterification at a target site in duplex DNA. The scissile phosphodiester is attacked by the catalytic tyrosine of the enzyme, resulting in the formation of a DNA-(5'-phosphotyrosyl)-enzyme intermediate and the expulsion of a 3'-OH DNA strand. The free DNA strand then undergoes passage around the unbroken strand, thus removing DNA supercoils. Finally, in the religation step, the DNA 3'-OH attacks the covalent intermediate to expel the active-site tyrosine and restore the DNA phosphodiester backbone. The sequence is that of DNA topoisomerase 3 from Pasteurella multocida (strain Pm70).